The following is a 110-amino-acid chain: Minor capsid protein VP2 (110 aa).

The protein belongs to the vesivirus VP2 protein family. In terms of assembly, homooligomer. The portal-like structure consists in 12 copies of VP2. Interacts with capsid protein VP1.

It localises to the virion. Its subcellular location is the host cytoplasm. Minor structural protein that forms a portal-like structure at a unique three-fold axis of symmetry, following binding to the host receptor. The channel formed by VP2 may allow the delivery of the viral genome through the host endosomal membrane. The chain is Minor capsid protein VP2 from Vesicular exanthema of swine virus serotype A48 (isolate Swine/United States/A48/1948) (VESV).